Reading from the N-terminus, the 533-residue chain is Cytochrome P450 monooxygenase calL (533 aa).

Residues 8-28 (TQLALLVWGIAVCVTLAIVVP) traverse the membrane as a helical segment. Residue Asn-33 is glycosylated (N-linked (GlcNAc...) asparagine). Positions 123 to 148 (GKFKQDQSGRSKNPVPGHDVKPGQPR) are disordered. Asn-388 carries N-linked (GlcNAc...) asparagine glycosylation. Cys-467 lines the heme pocket.

It belongs to the cytochrome P450 family. Heme serves as cofactor.

It is found in the membrane. It participates in secondary metabolite biosynthesis. Its function is as follows. Cytochrome P450 monooxygenase; part of the gene cluster that mediates the biosynthesis of calbistrin A and related compounds. Calbistrin A is a secondary metabolite with an interesting structure that was recently found to have bioactivity against leukemia cells. It consists of two polyketides linked by an ester bond: a bicyclic decalin containing polyketide and a linear 12 carbon dioic acid structure. The polyketide synthase calA is probably responsible for forming the decalin moiety. Because calA lacks a designated enoylreductase (ER) domain, the required activity is provided by the trans-enoyl reductase calK. Following release from the PKS, calF then probably catalyzes the oxidation and the subsequent Diels Alder cycloisomerization that lead to the formation of the decalin moiety. The decalin polyketide backbone includes two C-methyl groups, at C7 and C11 in backbone, of which the C7 position is probably methylated by the methyltransferase domain of calA. A candidate for adding the methyl group at C11, if not done by CalA, is the cluster methyltransferase calH. Several additional tailoring enzymes within the cluster could be involved in the modification of the decalin polyketide product. Those include the 3 cytochrome P450 monooxygenases CalE, CalG and CalL, of which one might be responsible for the introduction of the extra hydroxyl group attached to the backbone of the decalin moiety, at position C9 in the backbone, that allows for attachment of the linear moiety. One tailoring enzyme activity that is expected to be involved in biosynthesis of calbistrin is an acyltransferase for connecting the two polyketide synthase products, and which could be performed by the cluster acyltransferase calJ. The enzyme responsible for the biosynthesis of the linear moiety, probably a second PKS, has not been identified yet. The polypeptide is Cytochrome P450 monooxygenase calL (Penicillium decumbens).